Consider the following 483-residue polypeptide: Aspartyl/glutamyl-tRNA(Asn/Gln) amidotransferase subunit B (483 aa).

It belongs to the GatB/GatE family. GatB subfamily. As to quaternary structure, heterotrimer of A, B and C subunits.

It carries out the reaction L-glutamyl-tRNA(Gln) + L-glutamine + ATP + H2O = L-glutaminyl-tRNA(Gln) + L-glutamate + ADP + phosphate + H(+). It catalyses the reaction L-aspartyl-tRNA(Asn) + L-glutamine + ATP + H2O = L-asparaginyl-tRNA(Asn) + L-glutamate + ADP + phosphate + 2 H(+). Allows the formation of correctly charged Asn-tRNA(Asn) or Gln-tRNA(Gln) through the transamidation of misacylated Asp-tRNA(Asn) or Glu-tRNA(Gln) in organisms which lack either or both of asparaginyl-tRNA or glutaminyl-tRNA synthetases. The reaction takes place in the presence of glutamine and ATP through an activated phospho-Asp-tRNA(Asn) or phospho-Glu-tRNA(Gln). This Herpetosiphon aurantiacus (strain ATCC 23779 / DSM 785 / 114-95) protein is Aspartyl/glutamyl-tRNA(Asn/Gln) amidotransferase subunit B.